A 107-amino-acid polypeptide reads, in one-letter code: DNA polymerase delta subunit 4 (107 aa).

Positions 1–16 match the PCNA-interaction protein motif (PIP box) motif; the sequence is MGRKRLITDSYPVVKR. Residues 1 to 44 form a disordered region; it reads MGRKRLITDSYPVVKRREGPAGHSKGELAPELGEEPQPRDEEEA. A compositionally biased stretch (basic and acidic residues) spans 15-28; that stretch reads KRREGPAGHSKGEL.

It belongs to the DNA polymerase delta subunit 4 family. In terms of assembly, component of the tetrameric DNA polymerase delta complex (Pol-delta4), which consists of POLD1/p125, POLD2/p50, POLD3/p66/p68 and POLD4/p12, with POLD1 bearing DNA polymerase and 3' to 5' proofreading exonuclease activities. Within this complex, directly interacts with POLD1 and POLD2. Directly interacts with PCNA, as do POLD1 and POLD3; this interaction stimulates Pol-delta4 polymerase activity. As POLD1 and POLD2, directly interacts with WRNIP1; this interaction stimulates DNA polymerase delta-mediated DNA synthesis, independently of the presence of PCNA. This stimulation may be due predominantly to an increase of initiation frequency and also to increased processivity. Upon genotoxic stress induced by DNA damaging agents or by replication stress, POLD4 is proteolytically degraded and Pol-delta4 is converted into a trimeric form of the complex (Pol-delta3) which has an increased proofreading activity. The DNA polymerase delta complex interacts with POLDIP2; this interaction is probably mediated through direct binding to POLD2. Post-translationally, ubiquitinated; undergoes 'Lys-48'-linked ubiquitination in response to UV irradiation, leading to proteasomal degradation. This modification is partly mediated by RNF8 and by the DCX(DTL) E3 ubiquitin ligase complex (also called CRL4(CDT2)). Efficient degradation requires the presence of PCNA and is required for the inhibition of fork progression after DNA damage.

Its subcellular location is the nucleus. As a component of the tetrameric DNA polymerase delta complex (Pol-delta4), plays a role in high fidelity genome replication and repair. Within this complex, increases the rate of DNA synthesis and decreases fidelity by regulating POLD1 polymerase and proofreading 3' to 5' exonuclease activity. Pol-delta4 participates in Okazaki fragment processing, through both the short flap pathway, as well as a nick translation system. Under conditions of DNA replication stress, required for the repair of broken replication forks through break-induced replication (BIR), a mechanism that may induce segmental genomic duplications of up to 200 kb. Involved in Pol-delta4 translesion synthesis (TLS) of templates carrying O6-methylguanine or abasic sites. Its degradation in response to DNA damage is required for the inhibition of fork progression and cell survival. This is DNA polymerase delta subunit 4 (POLD4) from Homo sapiens (Human).